We begin with the raw amino-acid sequence, 577 residues long: 2-succinyl-5-enolpyruvyl-6-hydroxy-3-cyclohexene-1-carboxylate synthase (577 aa).

Belongs to the TPP enzyme family. MenD subfamily. Homodimer. The cofactor is Mg(2+). Mn(2+) is required as a cofactor. It depends on thiamine diphosphate as a cofactor.

It carries out the reaction isochorismate + 2-oxoglutarate + H(+) = 5-enolpyruvoyl-6-hydroxy-2-succinyl-cyclohex-3-ene-1-carboxylate + CO2. Its pathway is quinol/quinone metabolism; 1,4-dihydroxy-2-naphthoate biosynthesis; 1,4-dihydroxy-2-naphthoate from chorismate: step 2/7. It participates in quinol/quinone metabolism; menaquinone biosynthesis. In terms of biological role, catalyzes the thiamine diphosphate-dependent decarboxylation of 2-oxoglutarate and the subsequent addition of the resulting succinic semialdehyde-thiamine pyrophosphate anion to isochorismate to yield 2-succinyl-5-enolpyruvyl-6-hydroxy-3-cyclohexene-1-carboxylate (SEPHCHC). The chain is 2-succinyl-5-enolpyruvyl-6-hydroxy-3-cyclohexene-1-carboxylate synthase from Enterococcus faecalis (strain ATCC 700802 / V583).